We begin with the raw amino-acid sequence, 298 residues long: Acetylglutamate kinase (298 aa).

Substrate-binding positions include 69–70 (GG), Arg91, and Asn196.

It belongs to the acetylglutamate kinase family. ArgB subfamily.

It localises to the cytoplasm. The enzyme catalyses N-acetyl-L-glutamate + ATP = N-acetyl-L-glutamyl 5-phosphate + ADP. Its pathway is amino-acid biosynthesis; L-arginine biosynthesis; N(2)-acetyl-L-ornithine from L-glutamate: step 2/4. In terms of biological role, catalyzes the ATP-dependent phosphorylation of N-acetyl-L-glutamate. The protein is Acetylglutamate kinase of Rhodopseudomonas palustris (strain BisB5).